Consider the following 331-residue polypeptide: Serine/threonine-protein phosphatase PP1 isozyme 7 (331 aa).

Met-1 bears the N-acetylmethionine mark. Mn(2+) contacts are provided by Asp-60, His-62, Asp-88, and Asn-120. Catalysis depends on His-121, which acts as the Proton donor. 2 residues coordinate Mn(2+): His-169 and His-244.

The protein belongs to the PPP phosphatase family. PP-1 subfamily. It depends on Mn(2+) as a cofactor. In terms of tissue distribution, expressed in roots, rosettes and flowers.

The protein localises to the nucleus. It localises to the cytoplasm. The catalysed reaction is O-phospho-L-seryl-[protein] + H2O = L-seryl-[protein] + phosphate. It catalyses the reaction O-phospho-L-threonyl-[protein] + H2O = L-threonyl-[protein] + phosphate. Phosphatase activity is strongly reduced by the protein phosphatase inhibitor 2 (I-2). Functionally, serine/threonine-protein phosphatase that possesses phosphatase activity toward para-nitrophenyl phosphate (pNPP) in vitro. The sequence is that of Serine/threonine-protein phosphatase PP1 isozyme 7 from Arabidopsis thaliana (Mouse-ear cress).